Here is a 279-residue protein sequence, read N- to C-terminus: Epidermal growth factor-like protein 7 (279 aa).

The signal sequence occupies residues 1-21 (MWGSGELLVAWFLVLAAGGTT). In terms of domain architecture, EMI spans 28 to 109 (SRRVCTVGVS…TNGLPGACGA (82 aa)). 9 disulfides stabilise this stretch: C32/C94, C57/C63, C93/C107, C112/C122, C116/C128, C130/C139, C146/C157, C153/C166, and C168/C181. Residues 108-140 (GAAICQPPCGNEGSCIRPGRCRCPVGWQGDTCQ) form the EGF-like 1 domain. The Cell attachment site signature appears at 131–133 (PVG). In terms of domain architecture, EGF-like 2; calcium-binding spans 142–182 (DVDECSTGEARCPQRCVNTVGSYWCQCWEGQSPSADGVLCL). 2 coiled-coil regions span residues 200-224 (SVVR…QLVL) and 250-274 (FQQL…GSCS).

In terms of assembly, interacts with ITGAV/ITGB3 in an RGD-dependent manner, increasing endothelial cell's motility.

It is found in the secreted. The protein localises to the extracellular space. Its function is as follows. Regulates vascular tubulogenesis in vivo. Inhibits platelet-derived growth factor (PDGF)-BB-induced smooth muscle cell migration and promotes endothelial cell adhesion to the extracellular matrix and angiogenesis. The polypeptide is Epidermal growth factor-like protein 7 (Egfl7) (Rattus norvegicus (Rat)).